Consider the following 309-residue polypeptide: Serine/threonine-protein phosphatase 2A catalytic subunit beta isoform (309 aa).

Positions 57, 59, 85, and 117 each coordinate Mn(2+). His-118 acts as the Proton donor in catalysis. Mn(2+) is bound by residues His-167 and His-241. Phosphotyrosine is present on Tyr-307. The residue at position 309 (Leu-309) is a Leucine methyl ester.

The protein belongs to the PPP phosphatase family. PP-1 subfamily. As to quaternary structure, PP2A consists of a common heterodimeric core enzyme (composed of a 36 kDa catalytic subunit (subunit C) and a 65 kDa constant regulatory subunit (PR65) (subunit A)) that associates with a variety of regulatory subunits. Proteins that associate with the core dimer include three families of regulatory subunits B (the R2/B/PR55/B55, R3/B''/PR72/PR130/PR59 and R5/B'/B56 families), the 48 kDa variable regulatory subunit, viral proteins, and cell signaling molecules. Binds PPME1. May indirectly interact with SGO1, most probably through regulatory B56 subunits. Interacts with CTTNBP2NL. Interacts with PTPA. Found in a complex with at least ARL2, PPP2CB, PPP2R1A, PPP2R2A, PPP2R5E and TBCD. Interacts with TBCD. Part of the core of STRIPAK complexes composed of PP2A catalytic and scaffolding subunits, the striatins (PP2A regulatory subunits), the striatin-associated proteins MOB4, STRIP1 and STRIP2, PDCD10 and members of the STE20 kinases, such as STK24 and STK26. Mn(2+) serves as cofactor. In terms of processing, reversibly methyl esterified on Leu-309 by leucine carboxyl methyltransferase 1 (Lcmt1) and protein phosphatase methylesterase 1 (Ppme1). Carboxyl methylation influences the affinity of the catalytic subunit for the different regulatory subunits, thereby modulating the PP2A holoenzyme's substrate specificity, enzyme activity and cellular localization. Post-translationally, phosphorylation of either threonine (by autophosphorylation-activated protein kinase) or tyrosine results in inactivation of the phosphatase. Auto-dephosphorylation has been suggested as a mechanism for reactivation. May be monoubiquitinated by NOSIP.

It is found in the cytoplasm. The protein resides in the nucleus. The protein localises to the chromosome. It localises to the centromere. Its subcellular location is the cytoskeleton. It is found in the spindle pole. The catalysed reaction is O-phospho-L-seryl-[protein] + H2O = L-seryl-[protein] + phosphate. It catalyses the reaction O-phospho-L-threonyl-[protein] + H2O = L-threonyl-[protein] + phosphate. Functionally, catalytic subunit of protein phosphatase 2A (PP2A), a serine/threonine phosphatase involved in the regulation of a wide variety of enzymes, signal transduction pathways, and cellular events. PP2A can modulate the activity of phosphorylase B kinase, casein kinase 2, mitogen-stimulated S6 kinase, and MAP-2 kinase. Part of the striatin-interacting phosphatase and kinase (STRIPAK) complexes. STRIPAK complexes have critical roles in protein (de)phosphorylation and are regulators of multiple signaling pathways including Hippo, MAPK, nuclear receptor and cytoskeleton remodeling. Different types of STRIPAK complexes are involved in a variety of biological processes such as cell growth, differentiation, apoptosis, metabolism and immune regulation. The chain is Serine/threonine-protein phosphatase 2A catalytic subunit beta isoform (Ppp2cb) from Mus musculus (Mouse).